The chain runs to 164 residues: Peptidyl-prolyl cis-trans isomerase A (164 aa).

Residue M1 is modified to N-acetylmethionine. Position 2 is an N-acetylvaline; in Peptidyl-prolyl cis-trans isomerase A, N-terminally processed (V2). A PPIase cyclophilin-type domain is found at 7–163; the sequence is FFDISADGEP…KKITISDCGQ (157 aa). At K28 the chain carries N6-acetyllysine; alternate. K28 is covalently cross-linked (Glycyl lysine isopeptide (Lys-Gly) (interchain with G-Cter in SUMO2); alternate). K28 participates in a covalent cross-link: Glycyl lysine isopeptide (Lys-Gly) (interchain with G-Cter in ubiquitin); alternate. K44 is modified (N6-acetyllysine). S77 is subject to Phosphoserine. K82 is subject to N6-acetyllysine; alternate. Residue K82 forms a Glycyl lysine isopeptide (Lys-Gly) (interchain with G-Cter in SUMO2); alternate linkage. Position 93 is a phosphothreonine (T93). N-linked (GlcNAc...) asparagine glycosylation is present at N108. K125, K131, and K133 each carry N6-acetyllysine.

Belongs to the cyclophilin-type PPIase family. PPIase A subfamily. Interacts with protein phosphatase PPP3CA/calcineurin A. Interacts with PRPF19 isoform 2 (via N-terminus). Interacts with isoform 2 of BSG/CD147. Interacts with FOXO1; the interaction promotes FOXO1 dephosphorylation, nuclear accumulation and transcriptional activity. Interacts with integrin ITGA2B:ITGB3; the interaction is ROS and peptidyl-prolyl cis-trans isomerase (PPIase) activity-dependent and is increased in the presence of thrombin. Interacts with MAP3K5. Interacts with TARDBP; the interaction is dependent on the RNA-binding activity of TARDBP and the PPIase activity of PPIA/CYPA and the acetylation of PPIA/CYPA at Lys-125 favors the interaction. Interacts with HNRNPA1, HNRNPA2B1, HNRNPC, RBMX, HNRNPK and HNRNPM. In terms of processing, acetylation at Lys-125 markedly inhibits catalysis of cis to trans isomerization. PPIA acetylation also antagonizes the immunosuppressive effects of cyclosporine by inhibiting the sequential steps of cyclosporine binding and calcineurin inhibition. Acetylation at Lys-125 favors the interaction with TARDBP.

It is found in the cytoplasm. The protein resides in the secreted. The protein localises to the nucleus. The enzyme catalyses [protein]-peptidylproline (omega=180) = [protein]-peptidylproline (omega=0). With respect to regulation, binds cyclosporin A (CsA). CsA mediates some of its effects via an inhibitory action on PPIase. In terms of biological role, catalyzes the cis-trans isomerization of proline imidic peptide bonds in oligopeptides. Exerts a strong chemotactic effect on leukocytes partly through activation of one of its membrane receptors BSG/CD147, initiating a signaling cascade that culminates in MAPK/ERK activation. Activates endothelial cells (ECs) in a proinflammatory manner by stimulating activation of NF-kappa-B and ERK, JNK and p38 MAP-kinases and by inducing expression of adhesion molecules including SELE and VCAM1. Induces apoptosis in ECs by promoting the FOXO1-dependent expression of CCL2 and BCL2L11 which are involved in EC chemotaxis and apoptosis. In response to oxidative stress, initiates proapoptotic and antiapoptotic signaling in ECs via activation of NF-kappa-B and AKT1 and up-regulation of antiapoptotic protein BCL2. Negatively regulates MAP3K5/ASK1 kinase activity, autophosphorylation and oxidative stress-induced apoptosis mediated by MAP3K5/ASK1. Necessary for the assembly of TARDBP in heterogeneous nuclear ribonucleoprotein (hnRNP) complexes and regulates TARDBP binding to RNA UG repeats and TARDBP-dependent expression of HDAC6, ATG7 and VCP which are involved in clearance of protein aggregates. Plays an important role in platelet activation and aggregation. Regulates calcium mobilization and integrin ITGA2B:ITGB3 bidirectional signaling via increased ROS production as well as by facilitating the interaction between integrin and the cell cytoskeleton. Binds heparan sulfate glycosaminoglycans. The sequence is that of Peptidyl-prolyl cis-trans isomerase A (PPIA) from Cricetulus griseus (Chinese hamster).